The following is a 113-amino-acid chain: Large ribosomal subunit protein uL22 (113 aa).

Belongs to the universal ribosomal protein uL22 family. As to quaternary structure, part of the 50S ribosomal subunit.

This protein binds specifically to 23S rRNA; its binding is stimulated by other ribosomal proteins, e.g. L4, L17, and L20. It is important during the early stages of 50S assembly. It makes multiple contacts with different domains of the 23S rRNA in the assembled 50S subunit and ribosome. Its function is as follows. The globular domain of the protein is located near the polypeptide exit tunnel on the outside of the subunit, while an extended beta-hairpin is found that lines the wall of the exit tunnel in the center of the 70S ribosome. This Symbiobacterium thermophilum (strain DSM 24528 / JCM 14929 / IAM 14863 / T) protein is Large ribosomal subunit protein uL22.